The primary structure comprises 99 residues: uncharacterized protein (99 aa).

The disordered stretch occupies residues 50–77 (SAHWEDARSSGGTSPIRARAGSEGRGCQ).

This is an uncharacterized protein from Homo sapiens (Human).